The chain runs to 118 residues: Holin-like protein CidA 2 (118 aa).

A run of 4 helical transmembrane segments spans residues 5–27, 31–50, 62–84, and 88–110; these read MLLLQVGVLYVFSLVGTWIQGVF, MPGSLIGMLMLFLLLSTRIL, LLVFLPLFLIPSTTGLMEYESFL, and GSIIFLLVVISTVVTLIVSGYIS.

It belongs to the CidA/LrgA family. CidA subfamily.

Its subcellular location is the cell membrane. In terms of biological role, increases the activity of extracellular murein hydrolases possibly by mediating their export via hole formation. Inhibited by the antiholin-like proteins LrgAB. In an unstressed cell, the LrgAB products probably inhibit the function of the CidA protein. When a cell is stressed by the addition of antibiotics or by other factors in the environment, CidA possibly oligomerizes within the bacterial cell membrane, creating lesions that disrupt the proton motive force, which in turn results in loss of cell viability. These lesions are also hypothesized to regulate the subsequent cell lysis by either allowing the murein hydrolases access to the cell wall substrate and/or regulating their activity by a possible change in the cell wall pH that results from loss of membrane potential. This Bacillus anthracis protein is Holin-like protein CidA 2 (cidA2).